Here is a 142-residue protein sequence, read N- to C-terminus: Ribonuclease VapC44 (142 aa).

The 123-residue stretch at 4 to 126 (LLDVNVLLAL…GRFVTFDQSI (123 aa)) folds into the PINc domain. Mg(2+) is bound by residues D6 and D105.

The protein belongs to the PINc/VapC protein family. Requires Mg(2+) as cofactor.

Toxic component of a type II toxin-antitoxin (TA) system. An RNase. Its cognate antitoxin is VapB44. This chain is Ribonuclease VapC44, found in Mycobacterium tuberculosis (strain CDC 1551 / Oshkosh).